The following is a 268-amino-acid chain: Tryptophan synthase alpha chain (268 aa).

Active-site proton acceptor residues include glutamate 49 and aspartate 60.

This sequence belongs to the TrpA family. As to quaternary structure, tetramer of two alpha and two beta chains.

The catalysed reaction is (1S,2R)-1-C-(indol-3-yl)glycerol 3-phosphate + L-serine = D-glyceraldehyde 3-phosphate + L-tryptophan + H2O. It functions in the pathway amino-acid biosynthesis; L-tryptophan biosynthesis; L-tryptophan from chorismate: step 5/5. Its function is as follows. The alpha subunit is responsible for the aldol cleavage of indoleglycerol phosphate to indole and glyceraldehyde 3-phosphate. The polypeptide is Tryptophan synthase alpha chain (Salmonella choleraesuis (strain SC-B67)).